A 455-amino-acid chain; its full sequence is MQIIVVGVNYKTAPVEIREKLAFGEAELGEAMKQLAKQKSILENVIVSTCNRTEIYAVVDQLHTGRYYIKAFLAEWFDIEAEAIAPYLRVLEGEAAAGHLFRVAAGLDSMVLGETQILGQVKGSYLLAQEIGTSGTILNHLFKQAVTFAKRAHSETGIGAHAVSVSYAAVELAKKIFGHLNGKHVLIIGAGKMGTLAAQNLYGNGVGKVTVVNRTLEKAKQLAAQFDGEAKSLGELSCALLEADIVISSTGAKGYMLTKEEMAPLEKMRKGRPLFMVDIAVPRDLDPALAELETVFLYDIDDLQDVVAANLAERQKAAALIEEMIEGELVAFGQWLQTLGVVPVIAALREKALAIQAETMKSLERKLPHLSERDRKVLNKHTKSIINQLLRDPILQVKELAAGPNADEALQLFMKIFNIEDAVKAEQRSAQRAEVQLRDEQQAEAVRAARPSWQL.

Substrate-binding positions include 49-52, Ser-109, 114-116, and Gln-120; these read TCNR and ETQ. Catalysis depends on Cys-50, which acts as the Nucleophile. Residue 189-194 participates in NADP(+) binding; sequence GAGKMG.

This sequence belongs to the glutamyl-tRNA reductase family. As to quaternary structure, homodimer.

It carries out the reaction (S)-4-amino-5-oxopentanoate + tRNA(Glu) + NADP(+) = L-glutamyl-tRNA(Glu) + NADPH + H(+). It participates in porphyrin-containing compound metabolism; protoporphyrin-IX biosynthesis; 5-aminolevulinate from L-glutamyl-tRNA(Glu): step 1/2. Functionally, catalyzes the NADPH-dependent reduction of glutamyl-tRNA(Glu) to glutamate 1-semialdehyde (GSA). The polypeptide is Glutamyl-tRNA reductase (Geobacillus thermodenitrificans (strain NG80-2)).